The primary structure comprises 165 residues: Endoribonuclease YbeY (165 aa).

3 residues coordinate Zn(2+): histidine 130, histidine 134, and histidine 140.

It belongs to the endoribonuclease YbeY family. Requires Zn(2+) as cofactor.

The protein localises to the cytoplasm. Functionally, single strand-specific metallo-endoribonuclease involved in late-stage 70S ribosome quality control and in maturation of the 3' terminus of the 16S rRNA. The protein is Endoribonuclease YbeY of Streptococcus pneumoniae serotype 4 (strain ATCC BAA-334 / TIGR4).